We begin with the raw amino-acid sequence, 285 residues long: Putative lipoprotein SCO4650 (285 aa).

A signal peptide spans 1-20; the sequence is MTGTTARRTVVSVAVSAALA. The N-palmitoyl cysteine moiety is linked to residue cysteine 21. Cysteine 21 is lipidated: S-diacylglycerol cysteine. A disordered region spans residues 27–63; the sequence is GPGGSDDAGHSTGPTGSARPSASAPASSRAPALTGPS. Low complexity predominate over residues 43–58; it reads SARPSASAPASSRAPA.

It localises to the cell membrane. In Streptomyces coelicolor (strain ATCC BAA-471 / A3(2) / M145), this protein is Putative lipoprotein SCO4650.